The primary structure comprises 255 residues: Triosephosphate isomerase (255 aa).

9-11 contributes to the substrate binding site; sequence NWK. The active-site Electrophile is the His-95. Glu-167 functions as the Proton acceptor in the catalytic mechanism. Substrate-binding positions include Gly-173, Ser-212, and 233–234; that span reads GG.

This sequence belongs to the triosephosphate isomerase family. As to quaternary structure, homodimer.

The protein resides in the cytoplasm. It catalyses the reaction D-glyceraldehyde 3-phosphate = dihydroxyacetone phosphate. The protein operates within carbohydrate biosynthesis; gluconeogenesis. It participates in carbohydrate degradation; glycolysis; D-glyceraldehyde 3-phosphate from glycerone phosphate: step 1/1. In terms of biological role, involved in the gluconeogenesis. Catalyzes stereospecifically the conversion of dihydroxyacetone phosphate (DHAP) to D-glyceraldehyde-3-phosphate (G3P). This chain is Triosephosphate isomerase, found in Yersinia pseudotuberculosis serotype O:1b (strain IP 31758).